The following is a 156-amino-acid chain: Ribosomal RNA large subunit methyltransferase H (156 aa).

S-adenosyl-L-methionine-binding positions include Leu-73, Gly-104, and 123–128 (LSPLTL).

Belongs to the RNA methyltransferase RlmH family. In terms of assembly, homodimer.

It is found in the cytoplasm. It carries out the reaction pseudouridine(1915) in 23S rRNA + S-adenosyl-L-methionine = N(3)-methylpseudouridine(1915) in 23S rRNA + S-adenosyl-L-homocysteine + H(+). In terms of biological role, specifically methylates the pseudouridine at position 1915 (m3Psi1915) in 23S rRNA. The polypeptide is Ribosomal RNA large subunit methyltransferase H (Pectobacterium carotovorum subsp. carotovorum (strain PC1)).